The sequence spans 650 residues: MLRKSVLELSSRLSIKRFPRNLGAQRFHLSSSRNASTSGKNGLPGAKPVGKPDASKVDPPKVTPPPPTKGNSSKVVIGGVAIAGAFLVAYQTGYLDQYLGKEQQKLSERIHSDALTEKLEEAHHLNVPSGVEDSTEKDGKVETQPQVTHSEASEGVQSDIELQPESDLSSDRFTYISSNQEETPQETVIDRAEINLPISASEDSGAKPDMPSEIISEAESVKLEAVPKPGDSPIIVNAQSSSVHRESETESASPKDPAALKTPEDGIEREVQLPGSLLKEYNLEGSDTESTGSSSIGEQITKETEAFPNSTEGLKDSYMTEDGKLVLDFLAAIHAAEKQQAHLDAQVFAEELRALKEKYENELRDLRARELMRIEEAAILDKELKRERTKAAAAIKAIQERMEDKLKAELEQKETEAQLALSKAEELAKAEMISTIAKEKAAQIEKMAEADLNIKALSMAFYARSEEARQSHSVHKLALGALALDDTLSKGLPVQKEIDTLQTYLEGTHKDSILGLVLSSLPEEARSNGTDTVLQLNQKFDTLKGTLRHFSLIPPGGGGILAHSLAHVASSLKFKEVDQANGGIESVIKKVDNYLAEGKLAEAAATLEEGVKGSKAEEIVSDWVRRARNRAITEQALTLLQSYATCVSLT.

A mitochondrion-targeting transit peptide spans 1-34; the sequence is MLRKSVLELSSRLSIKRFPRNLGAQRFHLSSSRN. The interval 26 to 74 is disordered; the sequence is RFHLSSSRNASTSGKNGLPGAKPVGKPDASKVDPPKVTPPPPTKGNSSK. Over residues 28 to 40 the composition is skewed to polar residues; sequence HLSSSRNASTSGK. Residues 35–74 are Mitochondrial matrix-facing; it reads ASTSGKNGLPGAKPVGKPDASKVDPPKVTPPPPTKGNSSK. The helical transmembrane segment at 75-95 threads the bilayer; the sequence is VVIGGVAIAGAFLVAYQTGYL. Residues 96-549 lie on the Mitochondrial intermembrane side of the membrane; it reads DQYLGKEQQK…FDTLKGTLRH (454 aa). Disordered regions lie at residues 121–168, 239–267, and 284–304; these read EAHH…ESDL, QSSS…EDGI, and EGSD…TKET. Over residues 284-299 the composition is skewed to low complexity; it reads EGSDTESTGSSSIGEQ. Coiled coils occupy residues 345-369 and 396-430; these read AQVF…LRAR and KAIQ…LAKA. Residues 550–570 traverse the membrane as a helical segment; the sequence is FSLIPPGGGGILAHSLAHVAS. Residues 571-650 are Mitochondrial matrix-facing; it reads SLKFKEVDQA…QSYATCVSLT (80 aa).

Belongs to the MICOS complex subunit Mic60 family. Component of the mitochondrial contact site and cristae organizing system (MICOS) complex. The MICOS complex associates with mitochondrial outer membrane proteins. Present in a large lipid-enriched complex called mitochondrial transmembrane lipoprotein (MTL) complex made of proteins located in the two mitochondrial membranes, including the TOM complex and the core components of the MICOS complex and containing at least digalactosyldiacylglycerol (DGDG). Binds to TOM40-1. Component of a mitochondrial large protein complex that contains, at least, MIC60, DGS1, TOM40, TOM20 proteins, and petC/RISP.

The protein localises to the mitochondrion inner membrane. In terms of biological role, component of the MICOS complex, a large protein complex of the mitochondrial inner membrane that plays crucial roles in the maintenance of crista junctions, inner membrane architecture, and formation of contact sites to the outer membrane. Plays a role in keeping cristae membranes connected to the inner boundary membrane. Also promotes protein import via the mitochondrial intermembrane space assembly (MIA) pathway. Involved in the maintenance of mitochondria morphology. Binds to glycerolipids such as cardiolipin (CL). Contributes to the export of phosphatidylethanolamine (PE) from mitochondria and to the import of galactoglycerolipids from plastids during phosphate (Pi) starvation. Promotes lipid desorption from membranes, likely as an initial step for lipid transfer, and regulates probably the tethering between the inner and outer membranes of mitochondria by binding to TOM40 proteins. In Arabidopsis thaliana (Mouse-ear cress), this protein is MICOS complex subunit MIC60, mitochondrial.